Consider the following 441-residue polypeptide: pH-response regulator protein palC (441 aa).

In terms of domain architecture, BRO1 spans 3 to 352 (ISYTGQLPTT…GAAYAAILQL (350 aa)). Disordered stretches follow at residues 278–304 (RKDD…TSSG) and 414–441 (KWTP…GSYY).

It belongs to the palC family.

In terms of biological role, required for the proteolytic cleavage of the transcription factor RIM101 in response to alkaline ambient pH. This Yarrowia lipolytica (strain CLIB 122 / E 150) (Yeast) protein is pH-response regulator protein palC.